We begin with the raw amino-acid sequence, 486 residues long: Aspartyl/glutamyl-tRNA(Asn/Gln) amidotransferase subunit B (486 aa).

This sequence belongs to the GatB/GatE family. GatB subfamily. As to quaternary structure, heterotrimer of A, B and C subunits.

It carries out the reaction L-glutamyl-tRNA(Gln) + L-glutamine + ATP + H2O = L-glutaminyl-tRNA(Gln) + L-glutamate + ADP + phosphate + H(+). It catalyses the reaction L-aspartyl-tRNA(Asn) + L-glutamine + ATP + H2O = L-asparaginyl-tRNA(Asn) + L-glutamate + ADP + phosphate + 2 H(+). Its function is as follows. Allows the formation of correctly charged Asn-tRNA(Asn) or Gln-tRNA(Gln) through the transamidation of misacylated Asp-tRNA(Asn) or Glu-tRNA(Gln) in organisms which lack either or both of asparaginyl-tRNA or glutaminyl-tRNA synthetases. The reaction takes place in the presence of glutamine and ATP through an activated phospho-Asp-tRNA(Asn) or phospho-Glu-tRNA(Gln). This Herminiimonas arsenicoxydans protein is Aspartyl/glutamyl-tRNA(Asn/Gln) amidotransferase subunit B.